Here is a 133-residue protein sequence, read N- to C-terminus: MYRSSISIQVFICVLFLPLDSGRPLIYMIDLSYICSDATVFSGKSRVIFFSNPICEHTRGNFYLFYLNYIINTFAPKNRGTRRCKPFGLHINCRKKIDCLHVQLSYILCKNKSRKRHMDAHAITLAWLAHALT.

Positions 1–22 (MYRSSISIQVFICVLFLPLDSG) are cleaved as a signal peptide. The N-linked (GlcNAc...) asparagine glycan is linked to Asn-111.

The protein resides in the secreted. This is an uncharacterized protein from Saccharomyces cerevisiae (strain ATCC 204508 / S288c) (Baker's yeast).